Consider the following 399-residue polypeptide: Aromatic-amino-acid aminotransferase (399 aa).

4 residues coordinate substrate: Gly36, Tyr67, Trp132, and Asn184. Lys247 carries the N6-(pyridoxal phosphate)lysine modification. Arg375 provides a ligand contact to substrate.

This sequence belongs to the class-I pyridoxal-phosphate-dependent aminotransferase family. Homodimer. Pyridoxal 5'-phosphate serves as cofactor.

Its subcellular location is the cytoplasm. It carries out the reaction an aromatic L-alpha-amino acid + 2-oxoglutarate = an aromatic oxo-acid + L-glutamate. The chain is Aromatic-amino-acid aminotransferase (phhC) from Pseudomonas aeruginosa (strain ATCC 15692 / DSM 22644 / CIP 104116 / JCM 14847 / LMG 12228 / 1C / PRS 101 / PAO1).